A 289-amino-acid polypeptide reads, in one-letter code: Serine/threonine-protein phosphatase Pgam5, mitochondrial (289 aa).

Belongs to the phosphoglycerate mutase family. BPG-dependent PGAM subfamily. In terms of assembly, interacts with Pk92B/ASK1.

It is found in the mitochondrion outer membrane. It carries out the reaction O-phospho-L-seryl-[protein] + H2O = L-seryl-[protein] + phosphate. The catalysed reaction is O-phospho-L-threonyl-[protein] + H2O = L-threonyl-[protein] + phosphate. In terms of biological role, displays phosphatase activity for serine/threonine residues, and dephosphorylates and activates Pk92B kinase. Has apparently no phosphoglycerate mutase activity. The chain is Serine/threonine-protein phosphatase Pgam5, mitochondrial from Drosophila mojavensis (Fruit fly).